The following is a 106-amino-acid chain: ATP-dependent Clp protease adapter protein ClpS (106 aa).

This sequence belongs to the ClpS family. In terms of assembly, binds to the N-terminal domain of the chaperone ClpA.

Involved in the modulation of the specificity of the ClpAP-mediated ATP-dependent protein degradation. In Escherichia fergusonii (strain ATCC 35469 / DSM 13698 / CCUG 18766 / IAM 14443 / JCM 21226 / LMG 7866 / NBRC 102419 / NCTC 12128 / CDC 0568-73), this protein is ATP-dependent Clp protease adapter protein ClpS.